The sequence spans 305 residues: uncharacterized protein (305 aa).

The next 10 helical transmembrane spans lie at 4 to 24 (LNIYIMLLGFSIFTGATFNLA), 38 to 58 (AWRFGLAAAVMLIILIFTEGI), 67 to 87 (AVSYIVLGIIGIFGFNALFFV), 95 to 115 (VNGALIMGLNPLLTAILARII), 125 to 145 (VLGIFFAFIGVLLVITQGSIE), 152 to 172 (ISGGDLIIFTGNVCWALYGVL), 183 to 203 (LSTTTYTMVIGAVSLIVVSLF), 215 to 235 (IGVWGAIAFMAFFTSVLGYLW), 250 to 270 (LFFNLVPVVTMIISFAVGTPI), and 272 to 292 (VFQVIGAVLVILGVLTASGVI). EamA domains are found at residues 15–140 (IFTG…LVIT) and 164–290 (VCWA…TASG).

It belongs to the EamA transporter family.

It localises to the cell membrane. This is an uncharacterized protein from Bacillus subtilis (strain 168).